Reading from the N-terminus, the 532-residue chain is Pre-rRNA-processing protein pro-1 (532 aa).

WD repeat units follow at residues 136–175 (AHYQNITKLALSDDDSMVFTASKDGAIHGYLVTELVSADR) and 287–326 (GHSDEITRLTINTDGTLLASGDASGKYCIWEISSHQCLKV). Residues 435–464 (TLGDDEDDAPEVGNQRRQNKKNNKKNRKLQ) are disordered. Positions 445 to 526 (EVGNQRRQNK…INRQMYEFVA (82 aa)) form a coiled coil. Over residues 451–464 (RQNKKNNKKNRKLQ) the composition is skewed to basic residues.

Belongs to the WD repeat IPI3/WDR18 family. As to quaternary structure, component of the PELP1 complex, composed of at least PELP1, TEX10 and WDR18. The complex interacts with pre-60S ribosome particles.

Its subcellular location is the nucleus. The protein localises to the nucleolus. It localises to the nucleoplasm. Functionally, component of the PELP1 complex involved in the nucleolar steps of 28S rRNA maturation and the subsequent nucleoplasmic transit of the pre-60S ribosomal subunit. Required for processing ITS2 sequences from rRNA intermediates during 26S rRNA maturation. Required in the soma to promote normal proliferation and prevent germline tumor formation. The protein is Pre-rRNA-processing protein pro-1 (pro-1) of Caenorhabditis briggsae.